The primary structure comprises 273 residues: Type III pantothenate kinase (273 aa).

An ATP-binding site is contributed by D7–K14. Substrate contacts are provided by residues F119 and G124 to R127. Residue D126 is the Proton acceptor of the active site. Residue D146 participates in K(+) binding. Residue T149 coordinates ATP. T206 is a substrate binding site.

This sequence belongs to the type III pantothenate kinase family. Homodimer. The cofactor is NH4(+). K(+) serves as cofactor.

The protein localises to the cytoplasm. It catalyses the reaction (R)-pantothenate + ATP = (R)-4'-phosphopantothenate + ADP + H(+). The protein operates within cofactor biosynthesis; coenzyme A biosynthesis; CoA from (R)-pantothenate: step 1/5. Its function is as follows. Catalyzes the phosphorylation of pantothenate (Pan), the first step in CoA biosynthesis. This Rhodopirellula baltica (strain DSM 10527 / NCIMB 13988 / SH1) protein is Type III pantothenate kinase.